The sequence spans 156 residues: Ribosomal RNA large subunit methyltransferase H (156 aa).

Residues Leu73, Gly104, and 123-128 (LSALTL) each bind S-adenosyl-L-methionine.

The protein belongs to the RNA methyltransferase RlmH family. Homodimer.

It is found in the cytoplasm. The enzyme catalyses pseudouridine(1915) in 23S rRNA + S-adenosyl-L-methionine = N(3)-methylpseudouridine(1915) in 23S rRNA + S-adenosyl-L-homocysteine + H(+). Specifically methylates the pseudouridine at position 1915 (m3Psi1915) in 23S rRNA. The protein is Ribosomal RNA large subunit methyltransferase H of Shewanella piezotolerans (strain WP3 / JCM 13877).